Reading from the N-terminus, the 354-residue chain is Dihydroflavonol 4-reductase (354 aa).

NADP(+)-binding residues include Lys-44 and Tyr-163.

Belongs to the NAD(P)-dependent epimerase/dehydratase family. Dihydroflavonol-4-reductase subfamily.

It carries out the reaction a (2R,3S,4S)-leucoanthocyanidin + NADP(+) = a (2R,3R)-dihydroflavonol + NADPH + H(+). The catalysed reaction is (2S)-flavan-4-ol + NADP(+) = (2S)-flavanone + NADPH + H(+). It functions in the pathway pigment biosynthesis; anthocyanin biosynthesis. In terms of biological role, bifunctional enzyme involved in flavonoid metabolism. The sequence is that of Dihydroflavonol 4-reductase (ANT18) from Hordeum vulgare (Barley).